The following is an 881-amino-acid chain: Probable intermembrane transport protein HI_1672 (881 aa).

The helical transmembrane segment at 30-49 threads the bilayer; that stretch reads FWLLPFIALCIGAILFFQIV.

This sequence belongs to the PqiB family.

Its subcellular location is the cell inner membrane. This is Probable intermembrane transport protein HI_1672 from Haemophilus influenzae (strain ATCC 51907 / DSM 11121 / KW20 / Rd).